Reading from the N-terminus, the 253-residue chain is 5'/3'-nucleotidase SurE (253 aa).

4 residues coordinate a divalent metal cation: Asp8, Asp9, Ser39, and Asn92.

It belongs to the SurE nucleotidase family. The cofactor is a divalent metal cation.

The protein resides in the cytoplasm. It catalyses the reaction a ribonucleoside 5'-phosphate + H2O = a ribonucleoside + phosphate. The catalysed reaction is a ribonucleoside 3'-phosphate + H2O = a ribonucleoside + phosphate. The enzyme catalyses [phosphate](n) + H2O = [phosphate](n-1) + phosphate + H(+). In terms of biological role, nucleotidase with a broad substrate specificity as it can dephosphorylate various ribo- and deoxyribonucleoside 5'-monophosphates and ribonucleoside 3'-monophosphates with highest affinity to 3'-AMP. Also hydrolyzes polyphosphate (exopolyphosphatase activity) with the preference for short-chain-length substrates (P20-25). Might be involved in the regulation of dNTP and NTP pools, and in the turnover of 3'-mononucleotides produced by numerous intracellular RNases (T1, T2, and F) during the degradation of various RNAs. This Serratia proteamaculans (strain 568) protein is 5'/3'-nucleotidase SurE.